The following is a 314-amino-acid chain: Ribose-phosphate pyrophosphokinase (314 aa).

Residues D37–E39 and R96–Q97 each bind ATP. H131 and D170 together coordinate Mg(2+). Residue K194 is part of the active site. Residues R196, D220, and D224–T228 contribute to the D-ribose 5-phosphate site.

Belongs to the ribose-phosphate pyrophosphokinase family. Class I subfamily. Homohexamer. It depends on Mg(2+) as a cofactor.

Its subcellular location is the cytoplasm. It carries out the reaction D-ribose 5-phosphate + ATP = 5-phospho-alpha-D-ribose 1-diphosphate + AMP + H(+). It participates in metabolic intermediate biosynthesis; 5-phospho-alpha-D-ribose 1-diphosphate biosynthesis; 5-phospho-alpha-D-ribose 1-diphosphate from D-ribose 5-phosphate (route I): step 1/1. Its function is as follows. Involved in the biosynthesis of the central metabolite phospho-alpha-D-ribosyl-1-pyrophosphate (PRPP) via the transfer of pyrophosphoryl group from ATP to 1-hydroxyl of ribose-5-phosphate (Rib-5-P). The polypeptide is Ribose-phosphate pyrophosphokinase (Vibrio vulnificus (strain CMCP6)).